We begin with the raw amino-acid sequence, 79 residues long: Putative antitoxin VapB12 (79 aa).

The protein belongs to the UPF0330 family.

In terms of biological role, possibly the antitoxin component of a type II toxin-antitoxin (TA) system. Its cognate toxin is VapC12 (Potential). This is Putative antitoxin VapB12 (vapB12) from Sulfurisphaera tokodaii (strain DSM 16993 / JCM 10545 / NBRC 100140 / 7) (Sulfolobus tokodaii).